The following is a 195-amino-acid chain: U8 snoRNA-decapping enzyme (195 aa).

Residues Gly18–Glu173 enclose the Nudix hydrolase domain. Positions 24, 50, and 57 each coordinate substrate. 4 residues coordinate Mn(2+): Gly59, Glu76, Glu80, and His99. Positions Phe61–Gly82 match the Nudix box motif. Gln170 is a binding site for substrate. Glu173 serves as a coordination point for Mn(2+).

This sequence belongs to the Nudix hydrolase family. NUDT16 subfamily. Homodimer. It depends on Mg(2+) as a cofactor. Mn(2+) serves as cofactor. Co(2+) is required as a cofactor. In terms of tissue distribution, expressed strongly in lung, kidney, adrenal gland, testis, heart and brain.

It localises to the nucleus. The protein localises to the nucleoplasm. It is found in the nucleolus. The protein resides in the cytoplasm. The catalysed reaction is a 5'-end (N(7)-methyl 5'-triphosphoguanosine)-ribonucleoside in mRNA + H2O = N(7)-methyl-GDP + a 5'-end phospho-ribonucleoside in mRNA + 2 H(+). It catalyses the reaction IDP + H2O = IMP + phosphate + H(+). It carries out the reaction dIDP + H2O = dIMP + phosphate + H(+). The enzyme catalyses a 5'-end NAD(+)-phospho-ribonucleoside in mRNA + H2O = a 5'-end phospho-adenosine-phospho-ribonucleoside in mRNA + beta-nicotinamide D-ribonucleotide + 2 H(+). The catalysed reaction is a 5'-end FAD-phospho-ribonucleoside in mRNA + H2O = a 5'-end phospho-adenosine-phospho-ribonucleoside in mRNA + FMN + 2 H(+). It catalyses the reaction a 5'-end CoA-ribonucleoside in mRNA + H2O = a 5'-end phospho-adenosine-phospho-ribonucleoside in mRNA + (R)-4'-phosphopantetheine + 2 H(+). The phosphatase activity is inhibited by the product IMP. RNA-binding and decapping enzyme that catalyzes the cleavage of the cap structure of snoRNAs and mRNAs in a metal-dependent manner. Part of the U8 snoRNP complex that is required for the accumulation of mature 5.8S and 28S rRNA. Has diphosphatase activity and removes m7G and/or m227G caps from U8 snoRNA and leaves a 5'monophosphate on the RNA. Also catalyzes the cleavage of the cap structure on mRNAs. Does not hydrolyze cap analog structures like 7-methylguanosine nucleoside triphosphate (m7GpppG). Also hydrolysis m7G- and m227G U3-capped RNAs but with less efficiencies. Has broad substrate specificity with manganese or cobalt as cofactor and can act on various RNA species. Binds to the U8 snoRNA; metal is not required for RNA-binding. May play a role in the regulation of snoRNAs and mRNAs degradation. Also acts as a phosphatase; hydrolyzes the non-canonical purine nucleotides inosine diphosphate (IDP) and deoxyinosine diphosphate (dITP) as well as guanosine diphosphate (GDP), deoxyguanosine diphosphate (dGDP), xanthine diphosphate (XDP), inosine triphosphate (ITP) and deoxyinosine triphosphate (ITP) to their respective monophosphate derivatives and does not distinguish between the deoxy- and ribose forms. The order of activity with different substrates is IDP &gt; dIDP &gt;&gt; GDP = dGDP &gt; XDP = ITP = dITP. Binds strongly to GTP, ITP and XTP. Participates in the hydrolysis of dIDP/IDP and probably excludes non-canonical purines from RNA and DNA precursor pools, thus preventing their incorporation into RNA and DNA and avoiding chromosomal lesions. Exhibits decapping activity towards NAD-capped RNAs and FAD-capped RNAs. Exhibits decapping activity towards dpCoA-capped RNAs in vitro. The chain is U8 snoRNA-decapping enzyme (NUDT16) from Homo sapiens (Human).